The chain runs to 83 residues: Small ribosomal subunit protein bS18 (83 aa).

Residues 1 to 23 (MKQRNNAKRVRLEQTRRPKKNPL) are disordered.

Belongs to the bacterial ribosomal protein bS18 family. Part of the 30S ribosomal subunit. Forms a tight heterodimer with protein bS6.

Binds as a heterodimer with protein bS6 to the central domain of the 16S rRNA, where it helps stabilize the platform of the 30S subunit. This Corynebacterium efficiens (strain DSM 44549 / YS-314 / AJ 12310 / JCM 11189 / NBRC 100395) protein is Small ribosomal subunit protein bS18.